The following is a 358-amino-acid chain: DNA replication and repair protein RecF (358 aa).

Residue 30 to 37 (GANGSGKT) participates in ATP binding.

It belongs to the RecF family.

It is found in the cytoplasm. In terms of biological role, the RecF protein is involved in DNA metabolism; it is required for DNA replication and normal SOS inducibility. RecF binds preferentially to single-stranded, linear DNA. It also seems to bind ATP. The sequence is that of DNA replication and repair protein RecF from Edwardsiella ictaluri (strain 93-146).